The chain runs to 619 residues: Probable pectinesterase/pectinesterase inhibitor 25 (619 aa).

An N-terminal signal peptide occupies residues 1–23 (MKMQTLNFTSSLLFLSFIFLSCA). Positions 31–84 (SPSQPHSEPPSQLPFEPPVESPFFPPSQPPIFVPPSQPPSLPPSQSQSPSLACK) are disordered. The segment covering 37 to 72 (SEPPSQLPFEPPVESPFFPPSQPPIFVPPSQPPSLP) has biased composition (pro residues). The tract at residues 73–231 (PSQSQSPSLA…TRLYSISLGL (159 aa)) is pectinesterase inhibitor 25. 5 N-linked (GlcNAc...) asparagine glycosylation sites follow: Asn-220, Asn-255, Asn-312, Asn-325, and Asn-364. The pectinesterase 25 stretch occupies residues 302–601 (AVIVGPFKSD…FTVYNFTMGD (300 aa)). Residue Thr-380 participates in substrate binding. Asn-382 carries N-linked (GlcNAc...) asparagine glycosylation. Residue Gln-410 coordinates substrate. Asp-433 serves as the catalytic Proton donor; for pectinesterase activity. A disulfide bond links Cys-447 and Cys-467. The active-site Nucleophile; for pectinesterase activity is the Asp-454. N-linked (GlcNAc...) asparagine glycosylation occurs at Asn-500. Substrate-binding residues include Arg-522 and Trp-524. Residues Asn-550, Asn-591, and Asn-596 are each glycosylated (N-linked (GlcNAc...) asparagine).

In the N-terminal section; belongs to the PMEI family. It in the C-terminal section; belongs to the pectinesterase family. Expressed in siliques.

Its subcellular location is the secreted. The protein localises to the cell wall. The catalysed reaction is [(1-&gt;4)-alpha-D-galacturonosyl methyl ester](n) + n H2O = [(1-&gt;4)-alpha-D-galacturonosyl](n) + n methanol + n H(+). It participates in glycan metabolism; pectin degradation; 2-dehydro-3-deoxy-D-gluconate from pectin: step 1/5. Acts in the modification of cell walls via demethylesterification of cell wall pectin. This Arabidopsis thaliana (Mouse-ear cress) protein is Probable pectinesterase/pectinesterase inhibitor 25 (PME25).